A 381-amino-acid polypeptide reads, in one-letter code: MKLLVGTLRLWEVGRQVAFSSLTPGQECSGLRKTFWAAMRAVRTRADHQKLGHCVTMGRIMRPDDANVAGNVHGGTILKMIEEAGAIISTRHCNSQNGERCVAALARVERTDFLSPMCIGEVAHVSAEITYTSKHSVEVQVHVMSENILTGTKKLTNKATLWYVPLSLKNVDKVLEVPPIVYLRQEQEEEGRKRYEAQKLERMETKWRNGDIVQPVLNPEPNTVSYSQSSLIHLVGPSDCTLHGFVHGGVTMKLMDEVAGIVAARHCKTNIVTASVDAINFHDKIRKGCVITISGRMTFTSNKSMEIEVLVDADPVVDNSQKRYRAASAFFTYVSLNQEGKPMPVPQLVPETEDEKKRFEEGKGRYLQMKAKRQGHTEPQP.

Positions 51 to 169 constitute a HotDog ACOT-type 1 domain; the sequence is LGHCVTMGRI…TLWYVPLSLK (119 aa). Asn-67 is a catalytic residue. Residues Lys-169 and Lys-199 each carry the N6-acetyllysine modification. The 115-residue stretch at 225–339 folds into the HotDog ACOT-type 2 domain; the sequence is SYSQSSLIHL…FFTYVSLNQE (115 aa). Asp-256 is an active-site residue. Lys-284 bears the N6-acetyllysine mark. A disordered region spans residues 342-381; that stretch reads PMPVPQLVPETEDEKKRFEEGKGRYLQMKAKRQGHTEPQP. Basic and acidic residues predominate over residues 354-364; sequence DEKKRFEEGKG.

As to quaternary structure, homohexamer. As to expression, widely expressed with highest levels in brain. High levels also found in thymus, large intestine and testis. Negligible in muscle and adipose tissue. In the central and peripheral nervous systems, displays a predominantly neuronal localization with highest expression in cell bodies and neurites.

The protein resides in the cytoplasm. The protein localises to the cytosol. The enzyme catalyses hexadecanoyl-CoA + H2O = hexadecanoate + CoA + H(+). It carries out the reaction dodecanoyl-CoA + H2O = dodecanoate + CoA + H(+). The catalysed reaction is tetradecanoyl-CoA + H2O = tetradecanoate + CoA + H(+). It catalyses the reaction decanoyl-CoA + H2O = decanoate + CoA + H(+). The enzyme catalyses octanoyl-CoA + H2O = octanoate + CoA + H(+). It carries out the reaction octadecanoyl-CoA + H2O = octadecanoate + CoA + H(+). The catalysed reaction is (9Z)-octadecenoyl-CoA + H2O = (9Z)-octadecenoate + CoA + H(+). Its pathway is lipid metabolism; fatty acid metabolism. Its function is as follows. Catalyzes the hydrolysis of acyl-CoAs into free fatty acids and coenzyme A (CoASH), regulating their respective intracellular levels. Preferentially hydrolyzes palmitoyl-CoA, but has a broad specificity acting on other fatty acyl-CoAs with chain-lengths of C8-C18. May play an important physiological function in brain. This Mus musculus (Mouse) protein is Cytosolic acyl coenzyme A thioester hydrolase (Acot7).